Here is a 243-residue protein sequence, read N- to C-terminus: 4-hydroxy-tetrahydrodipicolinate reductase (243 aa).

NAD(+)-binding positions include 9–14 (GANGKM), 78–80 (GTS), and 104–107 (APNF). Residue His-134 is the Proton donor/acceptor of the active site. His-135 contacts (S)-2,3,4,5-tetrahydrodipicolinate. Residue Lys-138 is the Proton donor of the active site. Residue 144–145 (GT) coordinates (S)-2,3,4,5-tetrahydrodipicolinate.

It belongs to the DapB family.

It is found in the cytoplasm. The catalysed reaction is (S)-2,3,4,5-tetrahydrodipicolinate + NAD(+) + H2O = (2S,4S)-4-hydroxy-2,3,4,5-tetrahydrodipicolinate + NADH + H(+). It carries out the reaction (S)-2,3,4,5-tetrahydrodipicolinate + NADP(+) + H2O = (2S,4S)-4-hydroxy-2,3,4,5-tetrahydrodipicolinate + NADPH + H(+). Its pathway is amino-acid biosynthesis; L-lysine biosynthesis via DAP pathway; (S)-tetrahydrodipicolinate from L-aspartate: step 4/4. Functionally, catalyzes the conversion of 4-hydroxy-tetrahydrodipicolinate (HTPA) to tetrahydrodipicolinate. The polypeptide is 4-hydroxy-tetrahydrodipicolinate reductase (Legionella pneumophila (strain Paris)).